The chain runs to 178 residues: Bifunctional protein PyrR (178 aa).

The PRPP-binding motif lies at 99–111 (VILVDDVLFTGRT).

Belongs to the purine/pyrimidine phosphoribosyltransferase family. PyrR subfamily. Homodimer and homohexamer; in equilibrium.

The catalysed reaction is UMP + diphosphate = 5-phospho-alpha-D-ribose 1-diphosphate + uracil. Regulates transcriptional attenuation of the pyrimidine nucleotide (pyr) operon by binding in a uridine-dependent manner to specific sites on pyr mRNA. This disrupts an antiterminator hairpin in the RNA and favors formation of a downstream transcription terminator, leading to a reduced expression of downstream genes. In terms of biological role, also displays a weak uracil phosphoribosyltransferase activity which is not physiologically significant. The protein is Bifunctional protein PyrR of Limosilactobacillus reuteri subsp. reuteri (strain JCM 1112) (Lactobacillus reuteri).